The chain runs to 457 residues: MNLTFDTIAAQATPNGRGGIGIVRVSGTLTTRVAKELLGKVPIQRKAEYLTFYHQNGNIIDKGIALFFPGPNSFTGEDILELHGHGGPVVLDLLLQRIITLPGVRIARPGEFSERAFLNEKIDLAQAEAIADLIDANSAQAARAAISSLQGVFSTTINDLVEKLTSLRVDIEAKINFPEENETNVSIDKKIIANLDQAILSINKIRTAAYQGCILREGIKIVITGKPNVGKSSIINALAGHEVAIVTNIAGTTRDILREYIYLDGIPVSIIDTAGLCNVSHNEVEKIGIQRAWNEIKQADHILLVVDSSTTKLSEQDKLCNTLIANFPYKTPVTIIRNKADITGEKIGETLNNNYSVITISALSSLGIEILLKYLTKIISLPSSTEGVFLARRRHLEALEITANYLLQCKEKISFPTMLELIAEDLQLAHNALSQITGKFSSHELLKKIFSRFCLGK.

(6S)-5-formyl-5,6,7,8-tetrahydrofolate contacts are provided by Arg24, Glu81, and Lys121. One can recognise a TrmE-type G domain in the interval 218–380 (GIKIVITGKP…LLKYLTKIIS (163 aa)). K(+) is bound at residue Asn228. Residues 228-233 (NVGKSS), 247-253 (TNIAGTT), 272-275 (DTAG), and 338-341 (NKAD) each bind GTP. Position 232 (Ser232) interacts with Mg(2+). Residues Thr247, Ile249, and Thr252 each coordinate K(+). Thr253 is a Mg(2+) binding site. Lys457 is a binding site for (6S)-5-formyl-5,6,7,8-tetrahydrofolate.

This sequence belongs to the TRAFAC class TrmE-Era-EngA-EngB-Septin-like GTPase superfamily. TrmE GTPase family. In terms of assembly, homodimer. Heterotetramer of two MnmE and two MnmG subunits. Requires K(+) as cofactor.

It localises to the cytoplasm. Its function is as follows. Exhibits a very high intrinsic GTPase hydrolysis rate. Involved in the addition of a carboxymethylaminomethyl (cmnm) group at the wobble position (U34) of certain tRNAs, forming tRNA-cmnm(5)s(2)U34. The protein is tRNA modification GTPase MnmE of Baumannia cicadellinicola subsp. Homalodisca coagulata.